An 81-amino-acid polypeptide reads, in one-letter code: X antigen family member 1 (81 aa).

Lysine 12 is covalently cross-linked (Glycyl lysine isopeptide (Lys-Gly) (interchain with G-Cter in SUMO2)). A Phosphoserine modification is found at serine 20. Residues lysine 61 and lysine 65 each participate in a glycyl lysine isopeptide (Lys-Gly) (interchain with G-Cter in SUMO2) cross-link.

The protein belongs to the GAGE family. In terms of tissue distribution, in normal tissues, highly expressed in testis. Expressed also in many different types of cancers: highly expressed in breast cancer, prostate cancer and many types of lung cancers, including squamous cell carcinoma, small cell carcinoma, non-small cell carcinoma, and adenocarcinoma, as well as in Ewing's cell lines, in some Ewing's sarcoma patient samples, and in one of one alveolar rhabdomyosarcoma patient sample.

The protein is X antigen family member 1 of Homo sapiens (Human).